Reading from the N-terminus, the 120-residue chain is UPF0102 protein Daro_0503 (120 aa).

Residues Met-1 to Ala-20 are disordered.

It belongs to the UPF0102 family.

This chain is UPF0102 protein Daro_0503, found in Dechloromonas aromatica (strain RCB).